The primary structure comprises 104 residues: Iron-sulfur cluster assembly protein CyaY (104 aa).

It belongs to the frataxin family.

Its function is as follows. Involved in iron-sulfur (Fe-S) cluster assembly. May act as a regulator of Fe-S biogenesis. The polypeptide is Iron-sulfur cluster assembly protein CyaY (Aliivibrio salmonicida (strain LFI1238) (Vibrio salmonicida (strain LFI1238))).